Reading from the N-terminus, the 425-residue chain is Decarboxylase flvG (425 aa).

Lys82 is subject to N6-(pyridoxal phosphate)lysine. Residues Ser213, Gly250, and 281–284 (EPGR) contribute to the pyridoxal 5'-phosphate site. 331–332 (FE) contacts substrate. Cys365 functions as the Proton donor; shared with dimeric partner in the catalytic mechanism. Asp366 is a binding site for substrate. Tyr395 serves as a coordination point for pyridoxal 5'-phosphate.

The protein belongs to the Orn/Lys/Arg decarboxylase class-II family. Homodimer. Only the dimer is catalytically active, as the active sites are constructed of residues from both monomers. The cofactor is pyridoxal 5'-phosphate.

It is found in the cytoplasm. It carries out the reaction N(6),N(6)-dimethyl-L-lysine + H(+) = N,N-dimethyl-cadaverine + CO2. The protein operates within secondary metabolite biosynthesis; terpenoid biosynthesis. Its function is as follows. Decarboxylase; part of the gene cluster that mediates the biosynthesis of flavunoidine, an alkaloidal terpenoid with a tetracyclic cage-like core connected to dimethylcadaverine via a C-N bond and acylated with 5,5-dimethyl-L-pipecolate. The tetracyclic core is synthesized by the terpene cyclase flvE and the cytochrome P450 monooxygenase flvD. The terpene cyclase flvE catalyzes the cyclization of farnesyl pyrophosphate (FPP) to form (1R,4R,5S)-(+)-acoradiene and the cytochrome P450 monooxygenase flvD is then responsible for oxidative conversion of (1R,4R,5S)-(+)-acoradiene into the tetracyclic cage present in the final product flavunoidine. In parallel, the N-methyltransferase flvH dimethylates L-lysine to give N,N-dimethyl-L-Lysin which is decarboxylated by flvG to afford dimethylcadaverine. The terpene cyclase-like protein flvF is the enzyme that attaches the dimethylcadaverine precusor at the C-7 of the tetracyclic cage to yield pre-flavunoidine. The cytochrome monooxygenase flvC hydroxylates the C-10 position of pre-flavunoidine whereas the NRPS flvI acylates the terpenoid core at the hydroxylated C-10 with dimethylpipecolate to yield final flavunoidine. The bifunctional enzyme flvA and the dehydrogenase flvB are responsible for the synthesis of the dimethylpipecolate precursor. The PLP-dependent lyase domain of flvA might use L-O-acetyl-homoserine and alpha-keto-isovalerate to form an intermediary ketone that can cyclize intramolecularly to yield an imine. The imine can be reduced by flvB to yield the 6-carboxylated pipecolate. The C-terminal alpha-KG-dependent oxygenase domain of flvA is then proposed to catalyze the decarboxylation to yield dimethylpipecolate. In Aspergillus flavus (strain ATCC 200026 / FGSC A1120 / IAM 13836 / NRRL 3357 / JCM 12722 / SRRC 167), this protein is Decarboxylase flvG.